A 331-amino-acid polypeptide reads, in one-letter code: Cysteine and histidine-rich domain-containing protein 1 (331 aa).

C5, C10, C24, H27, C42, C43, C59, H64, C157, C162, C176, H179, C194, C195, C211, and H216 together coordinate Zn(2+). 2 consecutive CHORD domains span residues 5 to 64 and 157 to 216; these read CYNR…KGLH and CKNA…TGTH. A CS domain is found at 227–316; it reads VVPCRHDWHQ…AEPLLWASLE (90 aa).

Functionally, regulates centrosome duplication. The polypeptide is Cysteine and histidine-rich domain-containing protein 1 (CHORDC1) (Gallus gallus (Chicken)).